Here is a 137-residue protein sequence, read N- to C-terminus: Small ribosomal subunit protein uS12 (137 aa).

Aspartate 102 carries the post-translational modification 3-methylthioaspartic acid.

This sequence belongs to the universal ribosomal protein uS12 family. In terms of assembly, part of the 30S ribosomal subunit. Contacts proteins S8 and S17. May interact with IF1 in the 30S initiation complex.

Functionally, with S4 and S5 plays an important role in translational accuracy. In terms of biological role, interacts with and stabilizes bases of the 16S rRNA that are involved in tRNA selection in the A site and with the mRNA backbone. Located at the interface of the 30S and 50S subunits, it traverses the body of the 30S subunit contacting proteins on the other side and probably holding the rRNA structure together. The combined cluster of proteins S8, S12 and S17 appears to hold together the shoulder and platform of the 30S subunit. This Mesoplasma florum (strain ATCC 33453 / NBRC 100688 / NCTC 11704 / L1) (Acholeplasma florum) protein is Small ribosomal subunit protein uS12.